The primary structure comprises 999 residues: Testis anion transporter 1 (999 aa).

Residues 1–93 (MQTERSLQSF…YRFKDWLLGD (93 aa)) lie on the Cytoplasmic side of the membrane. The chain crosses the membrane as a helical span at residues 94–114 (LLAGLSVGLVQVPQGLILSLL). Over 115–117 (TRQ) the chain is Extracellular. A helical membrane pass occupies residues 118-138 (LIPPLNVTYAAFCSSVIYVIF). A topological domain (cytoplasmic) is located at residue Gly139. The chain crosses the membrane as a helical span at residues 140 to 160 (SCHQMSIGPFFLVSALMINVL). Residues 161-200 (KDRPFNNGHLILGTFVKDDFSVPTFYLSYNRSLSMVASTT) are Extracellular-facing. An N-linked (GlcNAc...) asparagine glycan is attached at Asn190. Residues 201–221 (FLTGIIQLSMGMLGMGFMATY) form a helical membrane-spanning segment. Residues 222 to 230 (LPEAATSAY) are Cytoplasmic-facing. Residues 231-251 (LAAVALHIILAQMTCILGIMV) traverse the membrane as a helical segment. Topologically, residues 252 to 268 (SFHAGPISFIYNIINYC) are extracellular. The helical transmembrane segment at 269–289 (IALPKANSTSILLFITSVVAL) threads the bilayer. The Cytoplasmic portion of the chain corresponds to 290–305 (RINKCIRITFNRYPIE). The helical transmembrane segment at 306 to 326 (FPMELLLILGFSLLTSKITMA) threads the bilayer. Residues 327 to 354 (TENSKMLMNMIPYSFVFPENPEFGILSR) are Extracellular-facing. A helical transmembrane segment spans residues 355 to 375 (VVLQALSLSFVSSFLLISLGK). Topologically, residues 376–390 (KIANFHNYRTNSNQD) are cytoplasmic. The chain crosses the membrane as a helical span at residues 391 to 411 (LIAIGLCNLLSSFFKCCVFTG). Residues 412–427 (SLSRTTIQDKSGGRQQ) are Extracellular-facing. Residues 428-448 (FASLVGAGVMLLLMVKMESFF) form a helical membrane-spanning segment. Topologically, residues 449 to 453 (HNLPN) are cytoplasmic. A helical membrane pass occupies residues 454–474 (AVLAGIILSNVVPYLEAIYNL). The Extracellular segment spans residues 475 to 494 (PSLWRQDQYECIIWMVTFSS). The chain crosses the membrane as a helical span at residues 495 to 515 (AILLGLDVGLLISLAFTFFVI). Residues 516–544 (TIRSHRTKILVLGQIPNTNIYRNVNDYRE) are Cytoplasmic-facing. Residues 541 to 796 (DYREVILIPG…LSLHDAVLFA (256 aa)) form the STAS domain. The chain crosses the membrane as a helical span at residues 545 to 565 (VILIPGVKIFQCCSSITFVNV). Topologically, residues 566–999 (YHLKQKVLKE…RKPHNYPNSP (434 aa)) are extracellular. Residues 661 to 999 (TVSSTSQRNI…RKPHNYPNSP (339 aa)) form an interaction with RACGAP1 region. Disordered stretches follow at residues 678 to 701 (EKAW…SESL) and 893 to 999 (SELD…PNSP). The segment covering 684–696 (NSPPRNSPLPPPE) has biased composition (pro residues). Composition is skewed to acidic residues over residues 893-903 (SELDPGSELDS) and 912-947 (ELES…EPEP). The segment covering 973–982 (GSSNSQSRAP) has biased composition (polar residues).

The protein belongs to the SLC26A/SulP transporter (TC 2.A.53) family. Interacts with RACGAP1. Interacts with CFTR; stimulates anion transport activity of CFTR. N-glycosylated. Expressed in testis and epididymis. Located at the end of the midpiece of the flagella, known as the annulus, in spermatozoa.

The protein resides in the membrane. It catalyses the reaction sulfate(out) + chloride(in) = sulfate(in) + chloride(out). It carries out the reaction oxalate(in) + chloride(out) = oxalate(out) + chloride(in). Antiporter that mediates the exchange of sulfate and oxalate against chloride ions across a membrane. Stimulates anion transport activity of CFTR. May cooperate with CFTR in the regulation of chloride and bicarbonate ions fluxes required for activation of the ADCY10/PKA pathway during sperm motility and sperm capacitation. May play a role in sperm tail differentiation and motility and hence male fertility. The sequence is that of Testis anion transporter 1 from Mus musculus (Mouse).